Consider the following 283-residue polypeptide: Putative transposase InsK for insertion sequence element IS150 (283 aa).

The region spanning 117–279 is the Integrase catalytic domain; the sequence is KATRPNEKWV…TPIEYRNQTY (163 aa).

It belongs to the transposase IS3/IS150/IS904 family.

Functionally, involved in the transposition of the insertion sequence IS150. The sequence is that of Putative transposase InsK for insertion sequence element IS150 (insK) from Escherichia coli (strain K12).